Reading from the N-terminus, the 180-residue chain is Putative 5'(3')-deoxyribonucleotidase (180 aa).

D9 acts as the Nucleophile in catalysis. Positions 9, 11, and 135 each coordinate Mg(2+). The active-site Proton donor is the D11.

It belongs to the 5'(3')-deoxyribonucleotidase family. Mg(2+) serves as cofactor.

In terms of biological role, dephosphorylates the 5' and 2'(3')-phosphates of deoxyribonucleotides. The chain is Putative 5'(3')-deoxyribonucleotidase from Staphylococcus aureus (strain Mu50 / ATCC 700699).